Reading from the N-terminus, the 89-residue chain is Bombyxin B-1 (89 aa).

The first 19 residues, 1–19 (MKTSVMFMLVIVISLMCSG), serve as a signal peptide directing secretion. 3 disulfide bridges follow: cysteine 29–cysteine 75, cysteine 41–cysteine 88, and cysteine 74–cysteine 79. A propeptide spans 48-66 (GGAQYAPYFWTRQYLGSRG) (c peptide like).

The protein belongs to the insulin family. In terms of assembly, heterodimer of a B chain and an A chain linked by two disulfide bonds.

The protein localises to the secreted. Its function is as follows. Brain peptide responsible for activation of prothoracic glands to produce ecdysone in insects. The sequence is that of Bombyxin B-1 (BBXB1) from Bombyx mori (Silk moth).